Consider the following 312-residue polypeptide: Ornithine carbamoyltransferase (312 aa).

Carbamoyl phosphate contacts are provided by residues 57–60, Q84, R108, and 135–138; these read STRT and HPCQ. L-ornithine-binding positions include N166, D226, and 230-231; that span reads SM. Residues 265–266 and R293 contribute to the carbamoyl phosphate site; that span reads CL.

The protein belongs to the aspartate/ornithine carbamoyltransferase superfamily. OTCase family.

The protein resides in the cytoplasm. The catalysed reaction is carbamoyl phosphate + L-ornithine = L-citrulline + phosphate + H(+). Its pathway is amino-acid biosynthesis; L-arginine biosynthesis; L-arginine from L-ornithine and carbamoyl phosphate: step 1/3. Functionally, reversibly catalyzes the transfer of the carbamoyl group from carbamoyl phosphate (CP) to the N(epsilon) atom of ornithine (ORN) to produce L-citrulline. The protein is Ornithine carbamoyltransferase of Brucella suis biovar 1 (strain 1330).